An 804-amino-acid polypeptide reads, in one-letter code: Enhancer of polycomb homolog 2 (804 aa).

Disordered regions lie at residues 372 to 395 (QSSD…ENDP), 484 to 508 (GFSS…DRHC), 603 to 624 (QSQQ…SDCM), and 646 to 669 (PVRS…VQPS). Polar residues-rich tracts occupy residues 611–624 (SHPK…SDCM) and 654–669 (DQNA…VQPS).

Belongs to the enhancer of polycomb family.

The protein resides in the nucleus. Functionally, may play a role in transcription or DNA repair. The sequence is that of Enhancer of polycomb homolog 2 (epc2) from Xenopus laevis (African clawed frog).